The chain runs to 202 residues: Protein EMBRYO DEFECTIVE 514 (202 aa).

Disordered stretches follow at residues 1 to 69 and 168 to 202; these read MAEE…PVKL and MKTP…RFRR. At A2 the chain carries N-acetylalanine. Composition is skewed to basic and acidic residues over residues 33-42 and 51-65; these read ETGDEKRERE and GESK…EKSG. Positions 174-202 are enriched in gly residues; sequence NGNGHGGGRGGGGGRRGGRGGGRGGRFRR.

Expressed in leaves, flowers and embryos at globular stage.

Its subcellular location is the nucleus. Functionally, may play a role in ribosome biogenesis and in determining the rate of cell division. Involved in a process essential for nuclear and nucleolar functions. The sequence is that of Protein EMBRYO DEFECTIVE 514 from Arabidopsis thaliana (Mouse-ear cress).